We begin with the raw amino-acid sequence, 111 residues long: 2Fe-2S ferredoxin (111 aa).

Residues 2–104 (PKIVILPHQD…DLVVEIPRYT (103 aa)) enclose the 2Fe-2S ferredoxin-type domain. Residues C42, C48, C51, and C87 each coordinate [2Fe-2S] cluster.

Belongs to the adrenodoxin/putidaredoxin family. [2Fe-2S] cluster serves as cofactor.

Its function is as follows. Ferredoxin are iron-sulfur proteins that transfer electrons in a wide variety of metabolic reactions. Although the function of this ferredoxin is unknown it is probable that it has a role as a cellular electron transfer protein. Involved in the in vivo assembly of the Fe-S clusters in a wide variety of iron-sulfur proteins. The chain is 2Fe-2S ferredoxin (fdx) from Escherichia coli O157:H7.